Reading from the N-terminus, the 1712-residue chain is Collagen alpha-2(IV) chain (1712 aa).

Positions 1 to 25 are cleaved as a signal peptide; the sequence is MGRDQRAVAGPALRRWLLLGTVTVG. Residues 26–183 constitute a propeptide, N-terminal propeptide (7S domain); the sequence is FLAQSVLAGV…LPKEERDRYR (158 aa). Disordered regions lie at residues 60–237, 302–448, 507–640, 690–906, and 1157–1480; these read RGQP…GFYG, GLRG…PDGF, INGE…DAGL, GLPG…SPGF, and TGPP…GLPG. The span at 68–84 shows a compositional bias: low complexity; the sequence is PQGYNGPPGLQGFPGLQ. Positions 121 to 130 are enriched in gly residues; it reads GHPGQGGPRG. The N-linked (GlcNAc...) asparagine glycan is linked to asparagine 138. A compositionally biased stretch (low complexity) spans 140 to 153; that stretch reads TQGDSGPQGPPGSE. Residues 175–186 show a composition bias toward basic and acidic residues; that stretch reads PKEERDRYRGEP. Positions 184 to 1484 are triple-helical region; it reads GEPGEPGLVG…SPGLPGMPGR (1301 aa). 2 stretches are compositionally biased toward pro residues: residues 215 to 224 and 433 to 445; these read RPGPPGPPGP and PPGPPGLPGPPGP. Basic and acidic residues-rich tracts occupy residues 511 to 520 and 571 to 582; these read PGRKGDRGDP and KGDDGSPGRDGL. 2 stretches are compositionally biased toward low complexity: residues 628–640 and 698–710; these read LKGQRGFPGDAGL and TGAKGLRGIPGFA. The span at 711 to 720 shows a compositional bias: gly residues; it reads GADGGPGPRG. Over residues 721–730 the composition is skewed to low complexity; the sequence is LPGDAGREGF. Positions 752–766 are enriched in pro residues; it reads DGSPGPIGLPGPDGP. 5 stretches are compositionally biased toward low complexity: residues 769–778, 813–823, 831–844, 1302–1328, and 1400–1421; these read ERGLPGEVLG, MPGMPGLKGQP, QPGLYGPPGLHGFP, GSAALPGSKGDTGNPGAPGTPGTKGWA, and QPGTVGPQGRRGPPGAPGEMGP. The 224-residue stretch at 1489-1712 folds into the Collagen IV NC1 domain; that stretch reads GYLLVKHSQT…SRCQVCMKNL (224 aa). Tyrosine 1490 carries the 3'-bromotyrosine modification. Disulfide bonds link cysteine 1504-cysteine 1593, cysteine 1537-cysteine 1590, cysteine 1549-cysteine 1555, cysteine 1612-cysteine 1708, cysteine 1646-cysteine 1705, and cysteine 1658-cysteine 1665.

Belongs to the type IV collagen family. In terms of assembly, there are six type IV collagen isoforms, alpha 1(IV)-alpha 6(IV), each of which can form a triple helix structure with 2 other chains to generate type IV collagen network. Interacts with EFEMP2. Prolines at the third position of the tripeptide repeating unit (G-X-Y) are hydroxylated in some or all of the chains. In terms of processing, type IV collagens contain numerous cysteine residues which are involved in inter- and intramolecular disulfide bonding. 12 of these, located in the NC1 domain, are conserved in all known type IV collagens. Post-translationally, the trimeric structure of the NC1 domains is stabilized by covalent bonds between Lys and Met residues. Proteolytic processing produces the C-terminal NC1 peptide, canstatin.

Its subcellular location is the secreted. It is found in the extracellular space. The protein localises to the extracellular matrix. It localises to the basement membrane. In terms of biological role, type IV collagen is the major structural component of glomerular basement membranes (GBM), forming a 'chicken-wire' meshwork together with laminins, proteoglycans and entactin/nidogen. Functionally, canstatin, a cleavage product corresponding to the collagen alpha 2(IV) NC1 domain, possesses both anti-angiogenic and anti-tumor cell activity. It inhibits proliferation and migration of endothelial cells, reduces mitochondrial membrane potential, and induces apoptosis. Specifically induces Fas-dependent apoptosis and activates procaspase-8 and -9 activity. Ligand for alphavbeta3 and alphavbeta5 integrins. The protein is Collagen alpha-2(IV) chain of Homo sapiens (Human).